The sequence spans 252 residues: Imidazole glycerol phosphate synthase subunit HisF (252 aa).

Residues Asp11 and Asp130 contribute to the active site.

Belongs to the HisA/HisF family. Heterodimer of HisH and HisF.

The protein localises to the cytoplasm. It carries out the reaction 5-[(5-phospho-1-deoxy-D-ribulos-1-ylimino)methylamino]-1-(5-phospho-beta-D-ribosyl)imidazole-4-carboxamide + L-glutamine = D-erythro-1-(imidazol-4-yl)glycerol 3-phosphate + 5-amino-1-(5-phospho-beta-D-ribosyl)imidazole-4-carboxamide + L-glutamate + H(+). The protein operates within amino-acid biosynthesis; L-histidine biosynthesis; L-histidine from 5-phospho-alpha-D-ribose 1-diphosphate: step 5/9. IGPS catalyzes the conversion of PRFAR and glutamine to IGP, AICAR and glutamate. The HisF subunit catalyzes the cyclization activity that produces IGP and AICAR from PRFAR using the ammonia provided by the HisH subunit. The chain is Imidazole glycerol phosphate synthase subunit HisF from Bacillus cereus (strain G9842).